The following is a 268-amino-acid chain: Acyl-CoA-binding domain-containing protein 4 (268 aa).

Residues 12 to 101 form the ACB domain; the sequence is CQKQFQAAVS…MKLVAQKVID (90 aa). Residues 23–32, 43–47, Lys-69, and Tyr-88 each bind an acyl-CoA; these read IQNLPKNGSY and YSYYK. The disordered stretch occupies residues 151–175; the sequence is AVSEPPCLPKEPAPPSPESHSPRDL. Pro residues predominate over residues 156-167; sequence PCLPKEPAPPSP. Phosphoserine occurs at positions 166 and 171.

In terms of biological role, binds medium- and long-chain acyl-CoA esters and may function as an intracellular carrier of acyl-CoA esters. The sequence is that of Acyl-CoA-binding domain-containing protein 4 (ACBD4) from Homo sapiens (Human).